A 357-amino-acid chain; its full sequence is 5-hydroxytryptamine receptor 5A (357 aa).

The Extracellular segment spans residues 1–36 (MDLPINLTSFSLSTPSTLEPNRSLDTEALRTSQSFL). Residues Asn-6 and Asn-21 are each glycosylated (N-linked (GlcNAc...) asparagine). Residues 37 to 63 (SAFRVLVLTLLGFLAAATFTWNLLVLA) traverse the membrane as a helical segment. Over 64 to 76 (TILRVRTFHRVPH) the chain is Cytoplasmic. Residues 77-103 (NLVASMAISDVLVAVLVMPLSLVHELS) form a helical membrane-spanning segment. The Extracellular segment spans residues 104 to 114 (GRRWQLGRRLC). A disulfide bond links Cys-114 and Cys-192. A helical membrane pass occupies residues 115–137 (QLWIACDVLCCTASIWNVTAIAL). Position 121 (Asp-121) interacts with serotonin. Over 138–155 (DRYWSITRHLEYTLRARK) the chain is Cytoplasmic. A helical membrane pass occupies residues 156–176 (RVSNVMILLTWALSAVISLAP). The Extracellular segment spans residues 177–198 (LLFGWGETYSELSEECQVSREP). The chain crosses the membrane as a helical span at residues 199-220 (SYTVFSTVGAFYLPLCVVLFVY). Topologically, residues 221 to 287 (WKIYKAAKFR…QKEQRAALMV (67 aa)) are cytoplasmic. A helical transmembrane segment spans residues 288–312 (GILIGVFVLCWFPFFVTELISPLCS). The Extracellular portion of the chain corresponds to 313–314 (WD). The chain crosses the membrane as a helical span at residues 315–339 (IPALWKSIFLWLGYSNSFFNPLIYT). The Cytoplasmic portion of the chain corresponds to 340-357 (AFNRSYSSAFKVFFSKQQ).

The protein belongs to the G-protein coupled receptor 1 family. As to expression, central nervous system.

It is found in the cell membrane. Functionally, G-protein coupled receptor for 5-hydroxytryptamine (serotonin), a biogenic hormone that functions as a neurotransmitter, a hormone and a mitogen. Also functions as a receptor for ergot alkaloid derivatives and other psychoactive substances. Ligand binding causes a conformation change that triggers signaling via guanine nucleotide-binding proteins (G proteins) and modulates the activity of downstream effectors. Htr5a is coupled to G(i)/G(o) G alpha proteins and mediates inhibitory neurotransmission: signaling inhibits adenylate cyclase activity and activates a phosphatidylinositol-calcium second messenger system that regulates the release of Ca(2+) ions from intracellular stores. The polypeptide is 5-hydroxytryptamine receptor 5A (Rattus norvegicus (Rat)).